The sequence spans 271 residues: Tryptophan synthase alpha chain (271 aa).

Active-site proton acceptor residues include glutamate 49 and aspartate 60.

The protein belongs to the TrpA family. Tetramer of two alpha and two beta chains.

The catalysed reaction is (1S,2R)-1-C-(indol-3-yl)glycerol 3-phosphate + L-serine = D-glyceraldehyde 3-phosphate + L-tryptophan + H2O. The protein operates within amino-acid biosynthesis; L-tryptophan biosynthesis; L-tryptophan from chorismate: step 5/5. Functionally, the alpha subunit is responsible for the aldol cleavage of indoleglycerol phosphate to indole and glyceraldehyde 3-phosphate. The protein is Tryptophan synthase alpha chain of Burkholderia thailandensis (strain ATCC 700388 / DSM 13276 / CCUG 48851 / CIP 106301 / E264).